Consider the following 369-residue polypeptide: Putative esterase slr0264 (369 aa).

Active-site charge relay system residues include Ser162, Asp303, and His334.

It belongs to the AB hydrolase superfamily. AB hydrolase 4 family.

The protein is Putative esterase slr0264 of Synechocystis sp. (strain ATCC 27184 / PCC 6803 / Kazusa).